The following is a 671-amino-acid chain: Probable potassium transport system protein Kup (671 aa).

The tract at residues 1–43 (MSQIPSPNDPASTGAAPSSAAVPAGPSATPAPSPTAGFSLPGH) is disordered. Low complexity predominate over residues 10-37 (PASTGAAPSSAAVPAGPSATPAPSPTAG). 12 helical membrane passes run 52–72 (LAAL…TSPL), 92–112 (VLGV…FKYM), 147–167 (LMLG…TPAI), 181–201 (PAME…LFLF), 209–229 (VGAV…VLGV), 255–275 (GWHG…GEAL), 291–311 (WLGL…ALLL), 323–343 (LLAP…AAIV), 381–401 (IYLP…VLGF), 407–427 (LASA…LLFH), 441–461 (AWPL…ANVV), and 465–485 (DGGW…STWK).

Belongs to the HAK/KUP transporter (TC 2.A.72) family.

The protein localises to the cell inner membrane. The enzyme catalyses K(+)(in) + H(+)(in) = K(+)(out) + H(+)(out). Its function is as follows. Transport of potassium into the cell. Likely operates as a K(+):H(+) symporter. The protein is Probable potassium transport system protein Kup of Anaeromyxobacter sp. (strain K).